Reading from the N-terminus, the 341-residue chain is L-threonine 3-dehydrogenase (341 aa).

Residue Cys-38 participates in Zn(2+) binding. Active-site charge relay system residues include Thr-40 and His-43. Positions 63, 64, 93, 96, 99, and 107 each coordinate Zn(2+). NAD(+) is bound by residues Ile-175, Asp-195, Arg-200, 262–264, and 286–287; these read LGI and IY.

This sequence belongs to the zinc-containing alcohol dehydrogenase family. As to quaternary structure, homotetramer. Requires Zn(2+) as cofactor.

It is found in the cytoplasm. The enzyme catalyses L-threonine + NAD(+) = (2S)-2-amino-3-oxobutanoate + NADH + H(+). It functions in the pathway amino-acid degradation; L-threonine degradation via oxydo-reductase pathway; glycine from L-threonine: step 1/2. Functionally, catalyzes the NAD(+)-dependent oxidation of L-threonine to 2-amino-3-ketobutyrate. In Solibacter usitatus (strain Ellin6076), this protein is L-threonine 3-dehydrogenase.